The chain runs to 311 residues: Acetyl-coenzyme A carboxylase carboxyl transferase subunit alpha (311 aa).

Positions 36 to 286 (NLEKEVAKVY…ASYFVSKLEK (251 aa)) constitute a CoA carboxyltransferase C-terminal domain.

Belongs to the AccA family. As to quaternary structure, acetyl-CoA carboxylase is a heterohexamer composed of biotin carboxyl carrier protein (AccB), biotin carboxylase (AccC) and two subunits each of ACCase subunit alpha (AccA) and ACCase subunit beta (AccD).

The protein localises to the cytoplasm. The catalysed reaction is N(6)-carboxybiotinyl-L-lysyl-[protein] + acetyl-CoA = N(6)-biotinyl-L-lysyl-[protein] + malonyl-CoA. Its pathway is lipid metabolism; malonyl-CoA biosynthesis; malonyl-CoA from acetyl-CoA: step 1/1. Component of the acetyl coenzyme A carboxylase (ACC) complex. First, biotin carboxylase catalyzes the carboxylation of biotin on its carrier protein (BCCP) and then the CO(2) group is transferred by the carboxyltransferase to acetyl-CoA to form malonyl-CoA. The protein is Acetyl-coenzyme A carboxylase carboxyl transferase subunit alpha of Campylobacter curvus (strain 525.92).